The sequence spans 450 residues: MTIHKKQNIGVFGFGKTGISVYEELQSKCNIIAYDDLEVNRNKFEELFSKNYIIPISDIKWQNLDKIVLSPGIPLTHEIVKIAKNFNIPITSDIDLFFEKSKGLNLLAVTGTNGKSTTTALISHILSDNGLDYPVAGNIGVPVLQAKASKGGYVLELSSFQLDLVKTFAAKIAVLLNITPDHLDRHENMEGYITAKSKIFDRMDKDSYGIINIDNDYCHEIFTNLQQKHHIKLIPFSVTKILEKGISIVNDIITDNFFEHISFKLISNKSLQGIHNSENIAASYAVARIIGLEPVKIIESISSFQGLPHRMQYLGNIDDINFYNDSKASNAIAAVQSIKALDNIYWLAGGIAKEGGIEEIKPYFSKIKKAYFYGQAKEMFANTAKDIIDFVICDDLKQAFELAYKDACKDNEKEKNILLAPCCSSYDQFKNFEERGELFIRLYNTLNLCL.

Position 111–117 (111–117) interacts with ATP; the sequence is GTNGKST.

It belongs to the MurCDEF family.

Its subcellular location is the cytoplasm. It catalyses the reaction UDP-N-acetyl-alpha-D-muramoyl-L-alanine + D-glutamate + ATP = UDP-N-acetyl-alpha-D-muramoyl-L-alanyl-D-glutamate + ADP + phosphate + H(+). It participates in cell wall biogenesis; peptidoglycan biosynthesis. Cell wall formation. Catalyzes the addition of glutamate to the nucleotide precursor UDP-N-acetylmuramoyl-L-alanine (UMA). The polypeptide is UDP-N-acetylmuramoylalanine--D-glutamate ligase (Rickettsia bellii (strain RML369-C)).